Here is a 206-residue protein sequence, read N- to C-terminus: Large ribosomal subunit protein uL4 (206 aa).

Belongs to the universal ribosomal protein uL4 family. As to quaternary structure, part of the 50S ribosomal subunit.

In terms of biological role, one of the primary rRNA binding proteins, this protein initially binds near the 5'-end of the 23S rRNA. It is important during the early stages of 50S assembly. It makes multiple contacts with different domains of the 23S rRNA in the assembled 50S subunit and ribosome. Functionally, forms part of the polypeptide exit tunnel. This Nitrobacter winogradskyi (strain ATCC 25391 / DSM 10237 / CIP 104748 / NCIMB 11846 / Nb-255) protein is Large ribosomal subunit protein uL4.